The sequence spans 310 residues: ATP phosphoribosyltransferase (310 aa).

It belongs to the ATP phosphoribosyltransferase family.

It is found in the cytoplasm. It carries out the reaction 1-(5-phospho-beta-D-ribosyl)-ATP + diphosphate = 5-phospho-alpha-D-ribose 1-diphosphate + ATP. It participates in amino-acid biosynthesis; L-histidine biosynthesis; L-histidine from 5-phospho-alpha-D-ribose 1-diphosphate: step 1/9. In terms of biological role, catalyzes the condensation of ATP and 5-phosphoribose 1-diphosphate to form N'-(5'-phosphoribosyl)-ATP (PR-ATP). Has a crucial role in the pathway because the rate of histidine biosynthesis seems to be controlled primarily by regulation of HisG enzymatic activity. This Schizosaccharomyces pombe (strain 972 / ATCC 24843) (Fission yeast) protein is ATP phosphoribosyltransferase (his1).